A 138-amino-acid chain; its full sequence is Large ribosomal subunit protein uL16 (138 aa).

It belongs to the universal ribosomal protein uL16 family. Part of the 50S ribosomal subunit.

Binds 23S rRNA and is also seen to make contacts with the A and possibly P site tRNAs. The sequence is that of Large ribosomal subunit protein uL16 from Rubrobacter xylanophilus (strain DSM 9941 / JCM 11954 / NBRC 16129 / PRD-1).